Reading from the N-terminus, the 314-residue chain is Deoxymugineic acid synthase 1-D (314 aa).

The segment at 1-21 is disordered; it reads MGAGEKTAAGMPRIGMGTAVQ. D44 is a binding site for NADP(+). The active-site Proton donor is the Y49. H112 provides a ligand contact to substrate. NADP(+)-binding positions include 158–159, Q180, 258–266, and 273–281; these read AN, FDEARMREN, and ELTEEERLR.

Belongs to the aldo/keto reductase family. In terms of tissue distribution, mostly expressed in root tissues, observed, at low levels, in mesocotyl and embryonic roots, seedling roots, crown and seedling leafes, mature bracts, anthers, pistil, caryopsis and embryos.

The enzyme catalyses 2'-deoxymugineate + NAD(+) = 3''-deamino-3''-oxonicotianamine + NADH + H(+). It catalyses the reaction 2'-deoxymugineate + NADP(+) = 3''-deamino-3''-oxonicotianamine + NADPH + H(+). The protein operates within siderophore biosynthesis. Functionally, catalyzes the reduction of a 3''-keto intermediate during the biosynthesis of 2'-deoxymugineic acid (DMA) from L-Met. Involved in the formation of phytosiderophores (MAs) belonging to the mugineic acid family and required to acquire iron. This is Deoxymugineic acid synthase 1-D from Triticum aestivum (Wheat).